Reading from the N-terminus, the 397-residue chain is Elongation factor Tu (397 aa).

The tr-type G domain occupies 10–207; it reads KPHVNVGTIG…TLDSYIPEPV (198 aa). Positions 19 to 26 are G1; the sequence is GHVDHGKT. A GTP-binding site is contributed by 19-26; the sequence is GHVDHGKT. Residue Thr-26 participates in Mg(2+) binding. The tract at residues 60-64 is G2; it reads GITIN. Position 77 is a phosphotyrosine (Tyr-77). Residues 81–84 form a G3 region; sequence DCPG. Residue 81 to 85 participates in GTP binding; sequence DCPGH. At Tyr-88 the chain carries Phosphotyrosine. 136–139 lines the GTP pocket; it reads NKAD. The tract at residues 136–139 is G4; it reads NKAD. The G5 stretch occupies residues 174-176; it reads SAL.

This sequence belongs to the TRAFAC class translation factor GTPase superfamily. Classic translation factor GTPase family. EF-Tu/EF-1A subfamily. Monomer.

The protein resides in the cytoplasm. It carries out the reaction GTP + H2O = GDP + phosphate + H(+). Its function is as follows. GTP hydrolase that promotes the GTP-dependent binding of aminoacyl-tRNA to the A-site of ribosomes during protein biosynthesis. In Pseudomonas aeruginosa (strain UCBPP-PA14), this protein is Elongation factor Tu.